The primary structure comprises 411 residues: LL-diaminopimelate aminotransferase (411 aa).

Substrate is bound by residues Y15 and G42. Pyridoxal 5'-phosphate-binding positions include Y72, A108–K109, Y132, N187, Y218, and S246–S248. 3 residues coordinate substrate: K109, Y132, and N187. K249 bears the N6-(pyridoxal phosphate)lysine mark. Pyridoxal 5'-phosphate-binding residues include R257 and N292. N292 and R388 together coordinate substrate.

Belongs to the class-I pyridoxal-phosphate-dependent aminotransferase family. LL-diaminopimelate aminotransferase subfamily. As to quaternary structure, homodimer. Pyridoxal 5'-phosphate is required as a cofactor.

It carries out the reaction (2S,6S)-2,6-diaminopimelate + 2-oxoglutarate = (S)-2,3,4,5-tetrahydrodipicolinate + L-glutamate + H2O + H(+). It functions in the pathway amino-acid biosynthesis; L-lysine biosynthesis via DAP pathway; LL-2,6-diaminopimelate from (S)-tetrahydrodipicolinate (aminotransferase route): step 1/1. Its function is as follows. Involved in the synthesis of meso-diaminopimelate (m-DAP or DL-DAP), required for both lysine and peptidoglycan biosynthesis. Catalyzes the direct conversion of tetrahydrodipicolinate to LL-diaminopimelate. The chain is LL-diaminopimelate aminotransferase from Crocosphaera subtropica (strain ATCC 51142 / BH68) (Cyanothece sp. (strain ATCC 51142)).